The following is a 302-amino-acid chain: tRNA pseudouridine synthase B (302 aa).

D38 acts as the Nucleophile in catalysis.

It belongs to the pseudouridine synthase TruB family. Type 1 subfamily.

The catalysed reaction is uridine(55) in tRNA = pseudouridine(55) in tRNA. Responsible for synthesis of pseudouridine from uracil-55 in the psi GC loop of transfer RNAs. This is tRNA pseudouridine synthase B from Ligilactobacillus salivarius (strain UCC118) (Lactobacillus salivarius).